The chain runs to 84 residues: Large ribosomal subunit protein bL31B (84 aa).

It belongs to the bacterial ribosomal protein bL31 family. Type B subfamily. In terms of assembly, part of the 50S ribosomal subunit.

This is Large ribosomal subunit protein bL31B from Staphylococcus aureus (strain Mu3 / ATCC 700698).